Here is a 406-residue protein sequence, read N- to C-terminus: Multifunctional CCA protein (406 aa).

ATP contacts are provided by G8 and R11. CTP contacts are provided by G8 and R11. Positions 21 and 23 each coordinate Mg(2+). Residues R91, R138, and R141 each contribute to the ATP site. Residues R91, R138, and R141 each contribute to the CTP site. The region spanning 229–331 (TGIHQEMVSD…LELLGRCDAL (103 aa)) is the HD domain.

The protein belongs to the tRNA nucleotidyltransferase/poly(A) polymerase family. Bacterial CCA-adding enzyme type 1 subfamily. In terms of assembly, monomer. Can also form homodimers and oligomers. The cofactor is Mg(2+). It depends on Ni(2+) as a cofactor.

It carries out the reaction a tRNA precursor + 2 CTP + ATP = a tRNA with a 3' CCA end + 3 diphosphate. It catalyses the reaction a tRNA with a 3' CCA end + 2 CTP + ATP = a tRNA with a 3' CCACCA end + 3 diphosphate. Catalyzes the addition and repair of the essential 3'-terminal CCA sequence in tRNAs without using a nucleic acid template. Adds these three nucleotides in the order of C, C, and A to the tRNA nucleotide-73, using CTP and ATP as substrates and producing inorganic pyrophosphate. tRNA 3'-terminal CCA addition is required both for tRNA processing and repair. Also involved in tRNA surveillance by mediating tandem CCA addition to generate a CCACCA at the 3' terminus of unstable tRNAs. While stable tRNAs receive only 3'-terminal CCA, unstable tRNAs are marked with CCACCA and rapidly degraded. The polypeptide is Multifunctional CCA protein (Stenotrophomonas maltophilia (strain R551-3)).